The sequence spans 418 residues: AP-3 complex subunit mu-2 (418 aa).

In terms of domain architecture, MHD spans 176-417 (NNEAYFDVVE…MTKAGKFQVR (242 aa)).

It belongs to the adaptor complexes medium subunit family. As to quaternary structure, adaptor protein complex 3 (AP-3) is a heterotetramer composed of two large adaptins (delta-type subunit AP3D1 and beta-type subunit AP3B1 or AP3B2), a medium adaptin (mu-type subunit AP3M1 or AP3M2) and a small adaptin (sigma-type subunit APS1 or AP3S2). AP-3 associates with the BLOC-1 complex.

The protein resides in the golgi apparatus. It localises to the cytoplasmic vesicle membrane. Its function is as follows. Component of the adaptor complexes which link clathrin to receptors in coated vesicles. Clathrin-associated protein complexes are believed to interact with the cytoplasmic tails of membrane proteins, leading to their selection and concentration. Ap47 is a subunit of the plasma membrane adaptor. In concert with the BLOC-1 complex, AP-3 is required to target cargos into vesicles assembled at cell bodies for delivery into neurites and nerve terminals. In Mus musculus (Mouse), this protein is AP-3 complex subunit mu-2 (Ap3m2).